The following is a 593-amino-acid chain: Methionine--tRNA ligase, mitochondrial (593 aa).

The N-terminal 29 residues, 1–29, are a transit peptide targeting the mitochondrion; that stretch reads MLRVSAFRLLGRRGASRVSLLEDFSFRYY. Residues 52–62 carry the 'HIGH' region motif; that stretch reads FYVNAAPHIGH. The 'KMSKS' region motif lies at 347–351; it reads KMSKS. K350 is an ATP binding site.

Belongs to the class-I aminoacyl-tRNA synthetase family.

Its subcellular location is the mitochondrion matrix. The enzyme catalyses tRNA(Met) + L-methionine + ATP = L-methionyl-tRNA(Met) + AMP + diphosphate. In Bos taurus (Bovine), this protein is Methionine--tRNA ligase, mitochondrial (MARS2).